Here is a 1000-residue protein sequence, read N- to C-terminus: Bifunctional glutamine synthetase adenylyltransferase/adenylyl-removing enzyme (1000 aa).

The adenylyl removase stretch occupies residues 1–481; the sequence is MTAPGRRSST…LHEKLFYRPL (481 aa). Positions 487 to 1000 are adenylyl transferase; sequence QLAPGEARLS…AVVDEQFYGA (514 aa).

Belongs to the GlnE family. Mg(2+) serves as cofactor.

It catalyses the reaction [glutamine synthetase]-O(4)-(5'-adenylyl)-L-tyrosine + phosphate = [glutamine synthetase]-L-tyrosine + ADP. It carries out the reaction [glutamine synthetase]-L-tyrosine + ATP = [glutamine synthetase]-O(4)-(5'-adenylyl)-L-tyrosine + diphosphate. Its function is as follows. Involved in the regulation of glutamine synthetase GlnA, a key enzyme in the process to assimilate ammonia. When cellular nitrogen levels are high, the C-terminal adenylyl transferase (AT) inactivates GlnA by covalent transfer of an adenylyl group from ATP to specific tyrosine residue of GlnA, thus reducing its activity. Conversely, when nitrogen levels are low, the N-terminal adenylyl removase (AR) activates GlnA by removing the adenylyl group by phosphorolysis, increasing its activity. The regulatory region of GlnE binds the signal transduction protein PII (GlnB) which indicates the nitrogen status of the cell. The protein is Bifunctional glutamine synthetase adenylyltransferase/adenylyl-removing enzyme of Streptomyces avermitilis (strain ATCC 31267 / DSM 46492 / JCM 5070 / NBRC 14893 / NCIMB 12804 / NRRL 8165 / MA-4680).